The following is a 426-amino-acid chain: Tryptophan synthase beta chain (426 aa).

Lys-108 is modified (N6-(pyridoxal phosphate)lysine).

The protein belongs to the TrpB family. In terms of assembly, tetramer of two alpha and two beta chains. Pyridoxal 5'-phosphate serves as cofactor.

It carries out the reaction (1S,2R)-1-C-(indol-3-yl)glycerol 3-phosphate + L-serine = D-glyceraldehyde 3-phosphate + L-tryptophan + H2O. The protein operates within amino-acid biosynthesis; L-tryptophan biosynthesis; L-tryptophan from chorismate: step 5/5. In terms of biological role, the beta subunit is responsible for the synthesis of L-tryptophan from indole and L-serine. The sequence is that of Tryptophan synthase beta chain (trpB) from Thermoplasma volcanium (strain ATCC 51530 / DSM 4299 / JCM 9571 / NBRC 15438 / GSS1).